The sequence spans 60 residues: Large ribosomal subunit protein eL37 (60 aa).

4 residues coordinate Zn(2+): C19, C22, C34, and C37. The segment at 19-37 adopts a C4-type zinc-finger fold; the sequence is CRRCGSISYHARHKVCSAC.

It belongs to the eukaryotic ribosomal protein eL37 family. Zn(2+) serves as cofactor.

Binds to the 23S rRNA. The sequence is that of Large ribosomal subunit protein eL37 from Methanosphaerula palustris (strain ATCC BAA-1556 / DSM 19958 / E1-9c).